Here is a 355-residue protein sequence, read N- to C-terminus: Probable aldo-keto reductase 3 (355 aa).

The active-site Proton donor is Tyr70. His138 contributes to the substrate binding site. 217 to 227 provides a ligand contact to NADP(+); the sequence is SPLGRGFFSSG.

Belongs to the aldo/keto reductase family.

This chain is Probable aldo-keto reductase 3, found in Oryza sativa subsp. japonica (Rice).